Here is a 496-residue protein sequence, read N- to C-terminus: probable leucine aminopeptidase 2 (496 aa).

A signal peptide spans 1 to 16 (MRSLLWASLLSGVLAG). Residues 111–205 (PSVEVTADVA…SLEDGQKLIK (95 aa)) enclose the PA domain. An N-linked (GlcNAc...) asparagine glycan is attached at Asn-224. Zn(2+) is bound by residues His-248 and Asp-260. Glu-292 serves as the catalytic Proton acceptor. Glu-293 lines the Zn(2+) pocket. Residue Asn-307 is glycosylated (N-linked (GlcNAc...) asparagine). Position 321 (Asp-321) interacts with Zn(2+). 2 N-linked (GlcNAc...) asparagine glycosylation sites follow: Asn-341 and Asn-402. Zn(2+) is bound at residue His-419. Residues Asn-424 and Asn-458 are each glycosylated (N-linked (GlcNAc...) asparagine). Residues 475–496 (KRAPKTHAHVSGSGCWHSQVEA) form a disordered region.

This sequence belongs to the peptidase M28 family. M28A subfamily. As to quaternary structure, monomer. Zn(2+) is required as a cofactor.

The protein localises to the secreted. Functionally, extracellular aminopeptidase that releases a wide variety of amino acids from natural peptides. This Aspergillus oryzae (strain ATCC 42149 / RIB 40) (Yellow koji mold) protein is probable leucine aminopeptidase 2 (lap2).